The following is a 694-amino-acid chain: TBC1 domain family member 14 (694 aa).

Serine 92 is subject to Phosphoserine. Residues 272–289 show a composition bias toward basic and acidic residues; sequence TAQKDSKKTQKEYEDKAG. The disordered stretch occupies residues 272-305; that stretch reads TAQKDSKKTQKEYEDKAGRPSRPPSPKQNVRKNL. Residue serine 296 is modified to Phosphoserine. Positions 402–612 constitute a Rab-GAP TBC domain; sequence GIPPSVRGKV…RIWDVFCRDG (211 aa).

In terms of assembly, interacts with ULK1. May interact with RAB11A and RAB11B, but does not exhibit any GTPase-activating activity toward these proteins. Interacts with TRAPPC8.

It localises to the golgi apparatus. Its subcellular location is the cis-Golgi network. The protein localises to the trans-Golgi network. In terms of biological role, plays a role in the regulation of starvation-induced autophagosome formation. Together with the TRAPPIII complex, regulates a constitutive trafficking step from peripheral recycling endosomes to the early Golgi, maintaining the cycling pool of ATG9 required for initiation of autophagy. This is TBC1 domain family member 14 (Tbc1d14) from Mus musculus (Mouse).